Here is a 250-residue protein sequence, read N- to C-terminus: Probable transcriptional regulatory protein Cpha266_0538 (250 aa).

Belongs to the TACO1 family.

It localises to the cytoplasm. The polypeptide is Probable transcriptional regulatory protein Cpha266_0538 (Chlorobium phaeobacteroides (strain DSM 266 / SMG 266 / 2430)).